A 101-amino-acid chain; its full sequence is Small ribosomal subunit protein uS14 (101 aa).

It belongs to the universal ribosomal protein uS14 family. As to quaternary structure, part of the 30S ribosomal subunit. Contacts proteins S3 and S10.

Its function is as follows. Binds 16S rRNA, required for the assembly of 30S particles and may also be responsible for determining the conformation of the 16S rRNA at the A site. This chain is Small ribosomal subunit protein uS14, found in Ralstonia pickettii (strain 12J).